The chain runs to 430 residues: Ribosomal protein uS12 methylthiotransferase RimO (430 aa).

Positions 2-119 (ISVYSISLGC…WPEMIGRALG (118 aa)) constitute an MTTase N-terminal domain. Cys11, Cys46, Cys81, Cys145, Cys149, and Cys152 together coordinate [4Fe-4S] cluster. The Radical SAM core domain maps to 131 to 361 (STGPSYAYLK…MEVQAEISEE (231 aa)). The region spanning 364–430 (EGFTGSDEDV…SRTYDLVALS (67 aa)) is the TRAM domain.

It belongs to the methylthiotransferase family. RimO subfamily. It depends on [4Fe-4S] cluster as a cofactor.

It localises to the cytoplasm. It catalyses the reaction L-aspartate(89)-[ribosomal protein uS12]-hydrogen + (sulfur carrier)-SH + AH2 + 2 S-adenosyl-L-methionine = 3-methylsulfanyl-L-aspartate(89)-[ribosomal protein uS12]-hydrogen + (sulfur carrier)-H + 5'-deoxyadenosine + L-methionine + A + S-adenosyl-L-homocysteine + 2 H(+). Its function is as follows. Catalyzes the methylthiolation of an aspartic acid residue of ribosomal protein uS12. The sequence is that of Ribosomal protein uS12 methylthiotransferase RimO from Oleidesulfovibrio alaskensis (strain ATCC BAA-1058 / DSM 17464 / G20) (Desulfovibrio alaskensis).